The chain runs to 233 residues: Lipoprotein-releasing system ATP-binding protein LolD (233 aa).

Positions 6–233 constitute an ABC transporter domain; sequence LQCDNLCKRY…TAELSLMGAE (228 aa). 42–49 contacts ATP; sequence GSSGSGKS.

It belongs to the ABC transporter superfamily. Lipoprotein translocase (TC 3.A.1.125) family. The complex is composed of two ATP-binding proteins (LolD) and two transmembrane proteins (LolC and LolE).

It localises to the cell inner membrane. Functionally, part of the ABC transporter complex LolCDE involved in the translocation of mature outer membrane-directed lipoproteins, from the inner membrane to the periplasmic chaperone, LolA. Responsible for the formation of the LolA-lipoprotein complex in an ATP-dependent manner. The chain is Lipoprotein-releasing system ATP-binding protein LolD from Escherichia coli O6:K15:H31 (strain 536 / UPEC).